The following is a 443-amino-acid chain: D-serine dehydratase (443 aa).

Residue Lys118 is modified to N6-(pyridoxal phosphate)lysine.

Belongs to the serine/threonine dehydratase family. DsdA subfamily. Monomer. It depends on pyridoxal 5'-phosphate as a cofactor.

It catalyses the reaction D-serine = pyruvate + NH4(+). The polypeptide is D-serine dehydratase (Yersinia enterocolitica serotype O:8 / biotype 1B (strain NCTC 13174 / 8081)).